The chain runs to 289 residues: S-methyl-5'-thioadenosine phosphorylase (289 aa).

Phosphate is bound by residues Ser11, 53–54 (RH), and 86–87 (SA). Met187 contributes to the substrate binding site. Phosphate is bound at residue Thr188. A substrate-binding site is contributed by 211–213 (DYD).

The protein belongs to the PNP/MTAP phosphorylase family. MTAP subfamily. As to quaternary structure, homohexamer. Dimer of a homotrimer.

The catalysed reaction is S-methyl-5'-thioadenosine + phosphate = 5-(methylsulfanyl)-alpha-D-ribose 1-phosphate + adenine. Its pathway is amino-acid biosynthesis; L-methionine biosynthesis via salvage pathway; S-methyl-5-thio-alpha-D-ribose 1-phosphate from S-methyl-5'-thioadenosine (phosphorylase route): step 1/1. In terms of biological role, catalyzes the reversible phosphorylation of S-methyl-5'-thioadenosine (MTA) to adenine and 5-methylthioribose-1-phosphate. Involved in the breakdown of MTA, a major by-product of polyamine biosynthesis. Responsible for the first step in the methionine salvage pathway after MTA has been generated from S-adenosylmethionine. Has broad substrate specificity with 6-aminopurine nucleosides as preferred substrates. The sequence is that of S-methyl-5'-thioadenosine phosphorylase from Thermosynechococcus vestitus (strain NIES-2133 / IAM M-273 / BP-1).